The primary structure comprises 517 residues: Ubiquitin carboxyl-terminal hydrolase 30 (517 aa).

Residues 1 to 35 (MLSSRAQAARTAADKALQRFLRTGAAVRYKVMKNW) lie on the Mitochondrial intermembrane side of the membrane. A helical membrane pass occupies residues 36–56 (GVIGGIAAALAAGIYVIWGPI). Topologically, residues 57–517 (TERKKRRKGL…QQGREYRSEE (461 aa)) are cytoplasmic. The region spanning 68-502 (PGLVNLGNTC…SAYLLFYERV (435 aa)) is the USP domain. Cysteine 77 (nucleophile) is an active-site residue. Residues lysine 235 and lysine 289 each participate in a glycyl lysine isopeptide (Lys-Gly) (interchain with G-Cter in ubiquitin) cross-link. A disordered region spans residues 364–395 (SQHGPKATESPGSALGVQDTQAAPKPGLSQPA). Histidine 452 functions as the Proton acceptor in the catalytic mechanism.

Belongs to the peptidase C19 family. In terms of processing, ubiquitinated by parkin (PRKN) at Lys-235 and Lys-289, leading to its degradation.

The protein resides in the mitochondrion outer membrane. It catalyses the reaction Thiol-dependent hydrolysis of ester, thioester, amide, peptide and isopeptide bonds formed by the C-terminal Gly of ubiquitin (a 76-residue protein attached to proteins as an intracellular targeting signal).. Its activity is regulated as follows. Inhibited by the diterpenoid derivative 15-oxospiramilactone (S3). In terms of biological role, deubiquitinating enzyme tethered to the mitochondrial outer membrane that acts as a key inhibitor of mitophagy by counteracting the action of parkin (PRKN): hydrolyzes ubiquitin attached by parkin on target proteins, such as RHOT1/MIRO1 and TOMM20, thereby blocking parkin's ability to drive mitophagy. Preferentially cleaves 'Lys-6'- and 'Lys-11'-linked polyubiquitin chains, 2 types of linkage that participate in mitophagic signaling. Does not cleave efficiently polyubiquitin phosphorylated at 'Ser-65'. Acts as a negative regulator of mitochondrial fusion by mediating deubiquitination of MFN1 and MFN2. The sequence is that of Ubiquitin carboxyl-terminal hydrolase 30 (Usp30) from Rattus norvegicus (Rat).